A 151-amino-acid chain; its full sequence is Urease accessory protein UreE (151 aa).

It belongs to the UreE family.

It is found in the cytoplasm. Functionally, involved in urease metallocenter assembly. Binds nickel. Probably functions as a nickel donor during metallocenter assembly. The chain is Urease accessory protein UreE from Bacillus cereus (strain ATCC 10987 / NRS 248).